Reading from the N-terminus, the 552-residue chain is Membrane protein insertase YidC (552 aa).

The helical transmembrane segment at 3–23 (IKRTVLWVIFFMSAVMLFDNW) threads the bilayer. Positions 36 to 59 (SATPTRTVGSAAPGTTTPGTQPAD) are disordered. Over residues 42–59 (TVGSAAPGTTTPGTQPAD) the composition is skewed to low complexity. A run of 3 helical transmembrane segments spans residues 364 to 384 (WGWS…PLSA), 430 to 450 (FGGC…YWVL), and 504 to 524 (MMFM…GLVL).

It belongs to the OXA1/ALB3/YidC family. Type 1 subfamily. Interacts with the Sec translocase complex via SecD. Specifically interacts with transmembrane segments of nascent integral membrane proteins during membrane integration.

It is found in the cell inner membrane. In terms of biological role, required for the insertion and/or proper folding and/or complex formation of integral membrane proteins into the membrane. Involved in integration of membrane proteins that insert both dependently and independently of the Sec translocase complex, as well as at least some lipoproteins. Aids folding of multispanning membrane proteins. This chain is Membrane protein insertase YidC, found in Paraburkholderia xenovorans (strain LB400).